The following is a 261-amino-acid chain: Sugar fermentation stimulation protein homolog (261 aa).

A disordered region spans residues Met1 to Ala23.

The protein belongs to the SfsA family.

In Syntrophobacter fumaroxidans (strain DSM 10017 / MPOB), this protein is Sugar fermentation stimulation protein homolog.